A 385-amino-acid polypeptide reads, in one-letter code: 1-deoxy-D-xylulose 5-phosphate reductoisomerase (385 aa).

6 residues coordinate NADPH: threonine 11, glycine 12, serine 13, isoleucine 14, glutamine 39, and asparagine 117. Residue lysine 118 participates in 1-deoxy-D-xylulose 5-phosphate binding. Position 119 (glutamate 119) interacts with NADPH. Aspartate 143 serves as a coordination point for Mn(2+). 1-deoxy-D-xylulose 5-phosphate is bound by residues serine 144, glutamate 145, serine 170, and histidine 193. A Mn(2+)-binding site is contributed by glutamate 145. Residue glycine 199 coordinates NADPH. 1-deoxy-D-xylulose 5-phosphate is bound by residues serine 206, asparagine 211, lysine 212, and glutamate 215. Glutamate 215 is a binding site for Mn(2+).

It belongs to the DXR family. Requires Mg(2+) as cofactor. The cofactor is Mn(2+).

The catalysed reaction is 2-C-methyl-D-erythritol 4-phosphate + NADP(+) = 1-deoxy-D-xylulose 5-phosphate + NADPH + H(+). It participates in isoprenoid biosynthesis; isopentenyl diphosphate biosynthesis via DXP pathway; isopentenyl diphosphate from 1-deoxy-D-xylulose 5-phosphate: step 1/6. Functionally, catalyzes the NADPH-dependent rearrangement and reduction of 1-deoxy-D-xylulose-5-phosphate (DXP) to 2-C-methyl-D-erythritol 4-phosphate (MEP). This Thermomicrobium roseum (strain ATCC 27502 / DSM 5159 / P-2) protein is 1-deoxy-D-xylulose 5-phosphate reductoisomerase.